Reading from the N-terminus, the 242-residue chain is Pyridoxine 5'-phosphate synthase (242 aa).

3-amino-2-oxopropyl phosphate is bound at residue Asn7. 1-deoxy-D-xylulose 5-phosphate is bound at residue 9-10; it reads DH. Arg18 is a binding site for 3-amino-2-oxopropyl phosphate. His43 (proton acceptor) is an active-site residue. The 1-deoxy-D-xylulose 5-phosphate site is built by Arg45 and His50. Glu70 acts as the Proton acceptor in catalysis. Residue Thr100 participates in 1-deoxy-D-xylulose 5-phosphate binding. His190 acts as the Proton donor in catalysis. Residues Gly191 and 212-213 each bind 3-amino-2-oxopropyl phosphate; that span reads GH.

It belongs to the PNP synthase family. In terms of assembly, homooctamer; tetramer of dimers.

It is found in the cytoplasm. It carries out the reaction 3-amino-2-oxopropyl phosphate + 1-deoxy-D-xylulose 5-phosphate = pyridoxine 5'-phosphate + phosphate + 2 H2O + H(+). It functions in the pathway cofactor biosynthesis; pyridoxine 5'-phosphate biosynthesis; pyridoxine 5'-phosphate from D-erythrose 4-phosphate: step 5/5. Catalyzes the complicated ring closure reaction between the two acyclic compounds 1-deoxy-D-xylulose-5-phosphate (DXP) and 3-amino-2-oxopropyl phosphate (1-amino-acetone-3-phosphate or AAP) to form pyridoxine 5'-phosphate (PNP) and inorganic phosphate. The protein is Pyridoxine 5'-phosphate synthase of Thermodesulfovibrio yellowstonii (strain ATCC 51303 / DSM 11347 / YP87).